Here is a 411-residue protein sequence, read N- to C-terminus: Multifunctional CCA protein (411 aa).

ATP-binding residues include Gly8 and Arg11. The CTP site is built by Gly8 and Arg11. Mg(2+) contacts are provided by Asp21 and Asp23. The ATP site is built by Arg91, Arg137, and Arg140. CTP-binding residues include Arg91, Arg137, and Arg140. The HD domain occupies 228–333 (SGVHTLLVIE…LKVFNALDIW (106 aa)).

The protein belongs to the tRNA nucleotidyltransferase/poly(A) polymerase family. Bacterial CCA-adding enzyme type 1 subfamily. In terms of assembly, monomer. Can also form homodimers and oligomers. Requires Mg(2+) as cofactor. Ni(2+) is required as a cofactor.

The catalysed reaction is a tRNA precursor + 2 CTP + ATP = a tRNA with a 3' CCA end + 3 diphosphate. It carries out the reaction a tRNA with a 3' CCA end + 2 CTP + ATP = a tRNA with a 3' CCACCA end + 3 diphosphate. Catalyzes the addition and repair of the essential 3'-terminal CCA sequence in tRNAs without using a nucleic acid template. Adds these three nucleotides in the order of C, C, and A to the tRNA nucleotide-73, using CTP and ATP as substrates and producing inorganic pyrophosphate. tRNA 3'-terminal CCA addition is required both for tRNA processing and repair. Also involved in tRNA surveillance by mediating tandem CCA addition to generate a CCACCA at the 3' terminus of unstable tRNAs. While stable tRNAs receive only 3'-terminal CCA, unstable tRNAs are marked with CCACCA and rapidly degraded. This chain is Multifunctional CCA protein, found in Actinobacillus pleuropneumoniae serotype 5b (strain L20).